A 175-amino-acid chain; its full sequence is Protein MAL2 (175 aa).

Residues 1–33 lie on the Cytoplasmic side of the membrane; that stretch reads MSAGGAVPPPPNPAVSFPAPRVTLPAGPDILRT. Positions 30–174 constitute an MARVEL domain; it reads ILRTYSGAFV…SLGLALRRWR (145 aa). Residues 34-54 form a helical membrane-spanning segment; the sequence is YSGAFVCLEIVLGGLVWILVA. The Lumenal segment spans residues 55–65; the sequence is SSNVPLPLLQG. Residues 66–86 traverse the membrane as a helical segment; that stretch reads WVMFVSVTAFFFSLLFLGLFL. Residues 87-101 lie on the Cytoplasmic side of the membrane; the sequence is SGMVTQIDANWNFLD. A helical membrane pass occupies residues 102–122; that stretch reads FVYHFIVFVFYFGAFLLEAAA. Residues 123 to 148 are Lumenal-facing; sequence TSLHDLQCNTTMTVKPLLNDNQYNIN. An N-linked (GlcNAc...) asparagine glycan is attached at Asn-131. A helical transmembrane segment spans residues 149–169; the sequence is VAATVFAFMTTACYGCSLGLA. The Cytoplasmic portion of the chain corresponds to 170-175; it reads LRRWRP.

Belongs to the MAL family. In terms of assembly, interacts with TPD52L2.

Its subcellular location is the cell membrane. The protein localises to the apical cell membrane. Its function is as follows. Member of the machinery of polarized transport. Required for the indirect transcytotic route at the step of the egress of the transcytosing cargo from perinuclear endosomes in order for it to travel to the apical surface via a raft-dependent pathway. This Mus musculus (Mouse) protein is Protein MAL2 (Mal2).